A 1627-amino-acid polypeptide reads, in one-letter code: Surface protein G (1627 aa).

A signal peptide spans Met-1 to Ala-50. Residues Tyr-22–Ser-33 carry the YSIRK-G/S signaling motif motif. Residues Ala-51–Glu-418 form a ligand binding A region, squamous nasal epithelial cell binding region. Disordered stretches follow at residues Glu-74–Ala-143, Lys-440–Thr-467, and Glu-496–Glu-1601. Basic and acidic residues-rich tracts occupy residues Asp-96–Ala-120, Lys-451–Lys-461, Gly-505–Pro-523, Ser-554–Asn-570, Lys-579–Lys-589, Ser-606–Ile-619, Gly-633–Pro-651, Ser-682–Asn-698, Lys-707–Lys-717, Gly-736–Ile-747, Gly-761–Pro-779, Ser-810–Asn-826, Lys-835–Lys-845, Ser-862–Ile-875, Gly-889–Pro-907, Ser-938–Asn-954, Lys-963–Lys-973, Ser-990–Ile-1003, Gly-1017–Pro-1035, Ser-1066–Asn-1082, Lys-1091–Lys-1101, Ser-1118–Ile-1131, Gly-1145–Pro-1163, Ser-1194–Asn-1210, Lys-1219–Lys-1229, Ser-1246–Ile-1259, Gly-1273–Pro-1291, Ser-1322–Asn-1338, Lys-1347–Lys-1357, Ser-1374–Val-1387, Lys-1431–Lys-1442, and Phe-1459–Gln-1478. The G5 1 domain occupies Ala-419 to Thr-501. Positions Tyr-547–Thr-629 constitute a G5 2 domain. A G5 3 domain is found at Tyr-675 to Thr-757. A G5 4 domain is found at Tyr-803–Thr-885. The G5 5 domain maps to Tyr-931–Thr-1013. The G5 6 domain maps to Tyr-1059–Thr-1141. In terms of domain architecture, G5 7 spans Tyr-1187–Thr-1269. The region spanning Tyr-1315 to Lys-1397 is the G5 8 domain. A G5 9 domain is found at His-1443–Lys-1525. The span at Gln-1481 to Pro-1495 shows a compositional bias: polar residues. Residues Glu-1509–Ser-1539 show a composition bias toward basic and acidic residues. The LPXTG sorting signal signature appears at Leu-1595 to Gly-1599. Residue Thr-1598 is modified to Pentaglycyl murein peptidoglycan amidated threonine. The propeptide at Gly-1599–Asn-1627 is removed by sortase.

The protein localises to the secreted. Its subcellular location is the cell wall. Its function is as follows. Promotes adhesion of bacterial cells to human squamous nasal epithelial cells, a phenomenon which is likely to be important in nasal colonization. Forms short, extremely dense and thin fibrils all over the bacterial surface. Does not bind to either buccal cells or non-differentiated keratinocytes. Promotes cellular aggregation leading to biofilm formation. The sequence is that of Surface protein G (sasG) from Staphylococcus aureus (strain NCTC 8325 / PS 47).